The following is a 507-amino-acid chain: Phosphoprotein (507 aa).

The interaction with N0 stretch occupies residues 1 to 48 (MAEEQARHVKNGLECIRALKAEPIGSLAVEEAMAAWSEISDNPGQDRA). 4 disordered regions span residues 40–92 (SDNP…DAET), 133–168 (SGLD…ITDR), 201–228 (NNFP…ETPI), and 252–273 (TQCA…GNVP). At serine 86 the chain carries Phosphoserine. A compositionally biased stretch (low complexity) spans 133–143 (SGLDGDSTLSG). Over residues 144–160 (GDDESENSDVDIGEPDT) the composition is skewed to acidic residues. Serine 151 carries the phosphoserine modification. Positions 260–270 (SEPSGPGAPAG) are enriched in low complexity. Residues 304–376 (GDYYDDELFS…LSSIMIAIPG (73 aa)) are multimerization. 2 interaction with the L polymerase regions span residues 361-377 (STLE…IPGL) and 396-410 (PIIG…AEVL). Residues 457 to 507 (GPASRSVIRSIIKSSRLEEDRKRYLMTLLDDIKGANDLAKFHQMLMKIIMK) are x domain (XD). Residues 459-507 (ASRSVIRSIIKSSRLEEDRKRYLMTLLDDIKGANDLAKFHQMLMKIIMK) are interaction with the nucleocapsid (N-RNA).

Belongs to the morbillivirus P protein family. Homotetramer. Interacts (via multimerization domain and XD domain) with polymerase L; this interaction forms the polymerase L-P complex. Interacts (via N-terminus) with N0 (via Ncore); this interaction allows P to chaperon N0 to avoid N polymerization and non-specific RNA binding before encapsidation. Interacts (via C-terminus) with N-RNA template (via Ntail); this interaction maintains the P/L complex anchored to the nucleocapsid template during the sequential transcription. Interacts (via C-terminus) with protein C this interaction allows C to associate with the ribonucleocapsid. In terms of processing, phosphorylation on serines by host CK2 is necessary for the formation of viral factories.

In terms of biological role, essential cofactor of the RNA polymerase L that plays a central role in the transcription and replication by forming the polymerase complex with RNA polymerase L and recruiting L to the genomic N-RNA template for RNA synthesis. Also plays a central role in the encapsidation of nascent RNA chains by forming the encapsidation complex with the nucleocapsid protein N (N-P complex). Acts as a chaperone for newly synthesized free N protein, so-called N0, allowing encapsidation of nascent RNA chains during replication. The nucleoprotein protein N prevents excessive phosphorylation of P, which leads to down-regulation of viral transcription/ replication. Participates, together with N, in the formation of viral factories (viroplasms), which are large inclusions in the host cytoplasm where replication takes place. This is Phosphoprotein (P/V) from Homo sapiens (Human).